Here is a 398-residue protein sequence, read N- to C-terminus: Cytochrome b (398 aa).

The helical transmembrane segment at 45 to 65 (LGSIAGIALVIQIITGVILAM) threads the bilayer. Heme b contacts are provided by His95 and His109. Transmembrane regions (helical) follow at residues 96 to 116 (AVGA…GLYY), 129 to 149 (IGII…VLPW), 164 to 184 (FSAI…GFSV), 192 to 212 (FFAL…LHLV), 245 to 265 (FVGF…APNY), 277 to 297 (PLVT…YAIL), 304 to 324 (LGGV…PWLD), 339 to 359 (IAFW…SKPV), and 366 to 386 (ISRF…PLIG). Residues His196 and His210 each coordinate heme b.

The protein belongs to the cytochrome b family. In terms of assembly, the main subunits of complex b-c1 are: cytochrome b, cytochrome c1 and the Rieske protein. Heme b is required as a cofactor.

Its subcellular location is the cell membrane. Its function is as follows. Component of the ubiquinol-cytochrome c reductase complex (complex III or cytochrome b-c1 complex), which is a respiratory chain that generates an electrochemical potential coupled to ATP synthesis. The sequence is that of Cytochrome b (petB) from Rickettsia prowazekii (strain Madrid E).